The primary structure comprises 422 residues: MDKLLINGGKALHGEVVISGAKNAALPIMAASLLASDHVTISNVPHLKDITTMMELLGQLGAHLIVDEKMNVQVDSSQVNEFVAPYDLVKTMRASILVLGPMLARFGKADVSLPGGCAIGTRPVDLHLKALRAMGADITVKNGYINARCKKGCLQGKRLMFDTVTVTGTENVLMAAVLAEGITTIKNAAREPEVVDLANFLIQMGAKIRGAGTSTIEVEGVESLNGGTYSVMSDRIEAGTYLAAGALTRGQVTVKKVRPDTLLSQLCKFEEAGAELTIGEDWVSLNMHNKRPQAVNISTAPYPAFATDMQAQFMAMNSVAEGSSTIIETIFENRFMHVQELQRMGANIQLNGNTAIVHGVEKLTGAPVMATDLRASASLILAGLVAEGETVVERIYHVDRGYERIEEKLSLLGADIKRVSDR.

A phosphoenolpyruvate-binding site is contributed by 22–23; the sequence is KN. Residue Arg-93 participates in UDP-N-acetyl-alpha-D-glucosamine binding. Cys-117 serves as the catalytic Proton donor. Cys-117 bears the 2-(S-cysteinyl)pyruvic acid O-phosphothioketal mark. Residues 122 to 126, Asp-308, and Ile-330 contribute to the UDP-N-acetyl-alpha-D-glucosamine site; that span reads RPVDL.

It belongs to the EPSP synthase family. MurA subfamily.

The protein resides in the cytoplasm. The enzyme catalyses phosphoenolpyruvate + UDP-N-acetyl-alpha-D-glucosamine = UDP-N-acetyl-3-O-(1-carboxyvinyl)-alpha-D-glucosamine + phosphate. The protein operates within cell wall biogenesis; peptidoglycan biosynthesis. In terms of biological role, cell wall formation. Adds enolpyruvyl to UDP-N-acetylglucosamine. This chain is UDP-N-acetylglucosamine 1-carboxyvinyltransferase, found in Legionella pneumophila (strain Paris).